Consider the following 55-residue polypeptide: Mitochondrial import receptor subunit TOM7 homolog (55 aa).

The Cytoplasmic portion of the chain corresponds to 1–20 (MVKLSKEAKQRLQQLFKGSQ). A helical membrane pass occupies residues 21–36 (FAIRWGFIPLVIYLGF). Topologically, residues 37–55 (KRGADPGMPEPTVLSLLWG) are mitochondrial intermembrane.

This sequence belongs to the Tom7 family. As to quaternary structure, forms part of the preprotein translocase complex of the outer mitochondrial membrane (TOM complex) which consists of at least 7 different proteins (TOMM5, TOMM6, TOMM7, TOMM20, TOMM22, TOMM40 and TOMM70).

It localises to the mitochondrion outer membrane. Its function is as follows. Required for assembly and stability of the TOM complex. Positive regulator of PRKN translocation to damaged mitochondria. Acts probably by stabilizing PINK1 on the outer membrane of depolarized mitochondria. The polypeptide is Mitochondrial import receptor subunit TOM7 homolog (TOMM7) (Homo sapiens (Human)).